Reading from the N-terminus, the 407-residue chain is Probable protein S-acyltransferase 9 (407 aa).

Transmembrane regions (helical) follow at residues 28–48 (WSIP…SVFV) and 62–82 (GHVF…LLFL). Residues 136 to 179 (KYCDTCMLYRPPRCSHCSICNNCVERFDHHCPWRNYRYFFMFVS) enclose the DHHC domain. Cys-166 (S-palmitoyl cysteine intermediate) is an active-site residue. 2 helical membrane passes run 174-194 (FFMF…MSAL) and 217-237 (AVML…LTGF). Residues 300-407 (LATTWERPEE…RSYAAAEEGR (108 aa)) form a disordered region. Residues 346-356 (DTAHHKIDIDQ) show a composition bias toward basic and acidic residues.

Belongs to the DHHC palmitoyltransferase family. Mainly expressed in seeds.

Its subcellular location is the cell membrane. It carries out the reaction L-cysteinyl-[protein] + hexadecanoyl-CoA = S-hexadecanoyl-L-cysteinyl-[protein] + CoA. Functionally, palmitoyl acyltransferase. The sequence is that of Probable protein S-acyltransferase 9 (PAT09) from Arabidopsis thaliana (Mouse-ear cress).